Here is a 690-residue protein sequence, read N- to C-terminus: Secreted LysM effector Vd5LysM (690 aa).

N-linked (GlcNAc...) asparagine glycosylation is found at asparagine 4 and asparagine 69. 3 consecutive LysM domains span residues threonine 203–isoleucine 248, aspartate 253–isoleucine 301, and arginine 341–valine 387. Asparagine 260, asparagine 295, asparagine 375, asparagine 410, asparagine 423, and asparagine 492 each carry an N-linked (GlcNAc...) asparagine glycan. Positions proline 523–aspartate 546 are disordered. The LysM 4 domain maps to threonine 549–valine 596. Positions serine 606–glycine 619 are enriched in low complexity. Residues serine 606–aspartate 636 are disordered. Residues glutamate 639–isoleucine 686 form the LysM 5 domain.

Belongs to the secreted LysM effector family.

Its function is as follows. Might have a role in sequestration of chitin oligosaccharides (breakdown products of fungal cell walls that are released during invasion and act as triggers of host immunity) to dampen host defense. Does not play an important role during host colonization. This is Secreted LysM effector Vd5LysM from Verticillium dahliae (strain VdLs.17 / ATCC MYA-4575 / FGSC 10137) (Verticillium wilt).